Reading from the N-terminus, the 301-residue chain is HTH-type transcriptional regulator EstR (301 aa).

The HTH lysR-type domain occupies 5–62 (PSLRQLSYLVTLSETLHFTEAARRSFVTQSTLSGGIMELERLLGGVLVERDRQNVRLT). Residues 22–41 (FTEAARRSFVTQSTLSGGIM) constitute a DNA-binding region (H-T-H motif).

It belongs to the LysR transcriptional regulatory family.

Transcriptional regulator of the esterase operon. The chain is HTH-type transcriptional regulator EstR (estR) from Acinetobacter baylyi (strain ATCC 33305 / BD413 / ADP1).